The following is a 141-amino-acid chain: ATP synthase epsilon chain (141 aa).

This sequence belongs to the ATPase epsilon chain family. In terms of assembly, F-type ATPases have 2 components, CF(1) - the catalytic core - and CF(0) - the membrane proton channel. CF(1) has five subunits: alpha(3), beta(3), gamma(1), delta(1), epsilon(1). CF(0) has three main subunits: a, b and c.

The protein localises to the cell inner membrane. Functionally, produces ATP from ADP in the presence of a proton gradient across the membrane. This chain is ATP synthase epsilon chain, found in Aromatoleum aromaticum (strain DSM 19018 / LMG 30748 / EbN1) (Azoarcus sp. (strain EbN1)).